A 436-amino-acid polypeptide reads, in one-letter code: uncharacterized protein (436 aa).

A run of 12 helical transmembrane segments spans residues 38 to 58 (ILIF…TVGA), 70 to 90 (VAGI…LLIG), 102 to 122 (LAGG…AALI), 125 to 145 (VALL…NLQV), 160 to 180 (TAAS…PNLV), 197 to 217 (GPFI…LIFL), 254 to 274 (IMVG…IMTM), 291 to 311 (LVIG…GLLV), 319 to 339 (MAIA…IAPA), 342 to 362 (LSLL…GLLT), 383 to 403 (FDVL…MVVA), and 409 to 429 (ILSI…IWYF).

Belongs to the major facilitator superfamily.

It is found in the cell membrane. This is an uncharacterized protein from Bacillus subtilis (strain 168).